A 377-amino-acid polypeptide reads, in one-letter code: Leukocyte elastase inhibitor (377 aa).

M1 bears the N-acetylmethionine mark.

It belongs to the serpin family. Ov-serpin subfamily.

It localises to the cytoplasm. Its function is as follows. Regulates the activity of the neutrophil proteases. This is Leukocyte elastase inhibitor (serpinb1) from Xenopus tropicalis (Western clawed frog).